A 356-amino-acid polypeptide reads, in one-letter code: Glutamine synthetase nodule isozyme (356 aa).

The region spanning 19–99 is the GS beta-grasp domain; sequence IIAEYIWIGG…VMCDAYTPAG (81 aa). The interval 41–66 is disordered; that stretch reads PGPVSDPSKLPKWNYDGSSTGQAPGE. The region spanning 106-356 is the GS catalytic domain; it reads KRHNAAKIFS…IADTTILWKP (251 aa).

This sequence belongs to the glutamine synthetase family. Homooctamer.

It localises to the cytoplasm. The catalysed reaction is L-glutamate + NH4(+) + ATP = L-glutamine + ADP + phosphate + H(+). The chain is Glutamine synthetase nodule isozyme from Vigna aconitifolia (Moth bean).